The sequence spans 666 residues: Pantothenate kinase 1 (666 aa).

It belongs to the type II pantothenate kinase family.

It catalyses the reaction (R)-pantothenate + ATP = (R)-4'-phosphopantothenate + ADP + H(+). It functions in the pathway cofactor biosynthesis; coenzyme A biosynthesis; CoA from (R)-pantothenate: step 1/5. With respect to regulation, regulated by feedback inhibition by malonyl-CoA. Functionally, catalyzes the phosphorylation of pantothenate the first step in CoA biosynthesis. May play a role in the physiological regulation of the intracellular CoA concentration. This Oryza sativa subsp. japonica (Rice) protein is Pantothenate kinase 1.